The chain runs to 220 residues: Protein DGCR6 (220 aa).

Positions 76-142 (KSLYNQRLRL…EQRAMDQKIV (67 aa)) form a coiled coil.

It belongs to the gonadal family. In terms of tissue distribution, found in all tissues examined with highest expression in liver, heart and skeletal muscle. Lower levels in pancreas and placenta. Weak expression in brain.

The protein resides in the nucleus. Its function is as follows. May play a role in neural crest cell migration into the third and fourth pharyngeal pouches. This Homo sapiens (Human) protein is Protein DGCR6 (DGCR6).